The primary structure comprises 397 residues: Succinate--CoA ligase [ADP-forming] subunit beta (397 aa).

Positions 9-254 constitute an ATP-grasp domain; that stretch reads KALLREFGVP…ESEEDAKEIE (246 aa). ATP is bound by residues Lys46, 53-55, Glu109, Ser112, and Glu117; that span reads GRG. Asn209 and Asp223 together coordinate Mg(2+). Residues Asn274 and 331 to 333 each bind substrate; that span reads GIM.

This sequence belongs to the succinate/malate CoA ligase beta subunit family. Heterotetramer of two alpha and two beta subunits. Requires Mg(2+) as cofactor.

The enzyme catalyses succinate + ATP + CoA = succinyl-CoA + ADP + phosphate. The catalysed reaction is GTP + succinate + CoA = succinyl-CoA + GDP + phosphate. It functions in the pathway carbohydrate metabolism; tricarboxylic acid cycle; succinate from succinyl-CoA (ligase route): step 1/1. Succinyl-CoA synthetase functions in the citric acid cycle (TCA), coupling the hydrolysis of succinyl-CoA to the synthesis of either ATP or GTP and thus represents the only step of substrate-level phosphorylation in the TCA. The beta subunit provides nucleotide specificity of the enzyme and binds the substrate succinate, while the binding sites for coenzyme A and phosphate are found in the alpha subunit. The polypeptide is Succinate--CoA ligase [ADP-forming] subunit beta (Nitrobacter hamburgensis (strain DSM 10229 / NCIMB 13809 / X14)).